Reading from the N-terminus, the 94-residue chain is Large ribosomal subunit protein bL27 (94 aa).

Positions 1 to 9 (MLKLNLQFF) are excised as a propeptide. Positions 12 to 32 (KKGVSSTKNGRDSESKRLGAK) are disordered. Residues 20 to 32 (NGRDSESKRLGAK) show a composition bias toward basic and acidic residues.

It belongs to the bacterial ribosomal protein bL27 family. In terms of processing, the N-terminus is cleaved by ribosomal processing cysteine protease Prp.

The sequence is that of Large ribosomal subunit protein bL27 from Staphylococcus carnosus (strain TM300).